The chain runs to 1690 residues: DNA-directed RNA polymerase subunit beta' (1690 aa).

C63, C65, C78, and C81 together coordinate Zn(2+). Residues D753, D755, and D757 each contribute to the Mg(2+) site. Residues C1107, C1295, C1302, and C1305 each contribute to the Zn(2+) site.

It belongs to the RNA polymerase beta' chain family. In terms of assembly, the RNAP catalytic core consists of 2 alpha, 1 beta, 1 beta' and 1 omega subunit. When a sigma factor is associated with the core the holoenzyme is formed, which can initiate transcription. The cofactor is Mg(2+). Zn(2+) is required as a cofactor.

It catalyses the reaction RNA(n) + a ribonucleoside 5'-triphosphate = RNA(n+1) + diphosphate. In terms of biological role, DNA-dependent RNA polymerase catalyzes the transcription of DNA into RNA using the four ribonucleoside triphosphates as substrates. The protein is DNA-directed RNA polymerase subunit beta' of Thermotoga neapolitana (strain ATCC 49049 / DSM 4359 / NBRC 107923 / NS-E).